A 613-amino-acid chain; its full sequence is MVISKQYHQEIEDFVFNLVHKYEDQQRDEQEKTHFSLKPQPSSVVLEEDYKTASSNSVKKIKEAFSVVGSVLYFTNFCLDKLGQPILNENPQLTEGWEIPKYQQVFSQILSLDGQEIQVKPKRPKSHCFNCGSEEHQIKDCPKPRNAARISEKRKEFMEAYGEASNQNFQQRYHAEEVEERFGKFKPGVISGELQDALGVTAKSLPPFIYRMRQLGYPPGWLKEAEMEHSGLALYDGKDDNETEDEGYLQPKHVTYDVSKLINYPGFNISTPSGIPDEWQIFGSIPMQPSQQKDVFAHYLSNFHAPSSKSSNKRTAPQPSSHHSKRPKDDLEVAVADMDIDSDVEVSQRSQTTNSFQFQPPLPPGPPVISTPPPLPQGTPPLTPRSLTPTQPSTPTHPPLPNTVSSLNPSSDVSQPKIVDSTMDEDTLTLEELEEQQRLIWAALEQAESTNSDSDIPVDTPLTGNSVTSSPSRNEVDVVAEVRSDKMVTLETKFSSISEQVPENEHSLTSPNPDNSSLNLKEIPDNSDSEGLLDNTVPAPNHEVNDGESIVDNKVVTSTESSAKNSNPVPDMSKFAVGIAPFEFENMTESTGTYLRIRSVLKNSPRNQQKKKT.

A CCHC-type zinc finger spans residues 126–143 (SHCFNCGSEEHQIKDCPK). 2 stretches are compositionally biased toward polar residues: residues 304-321 (HAPS…QPSS) and 345-358 (EVSQ…SFQF). 4 disordered regions span residues 304-330 (HAPS…PKDD), 344-417 (VEVS…SQPK), 448-473 (ESTN…SPSR), and 494-546 (FSSI…EVND). Residues 360–383 (PPLPPGPPVISTPPPLPQGTPPLT) are compositionally biased toward pro residues. Residues 384 to 394 (PRSLTPTQPST) show a composition bias toward low complexity. Residues 404–414 (VSSLNPSSDVS) show a composition bias toward polar residues. The stretch at 431 to 451 (EELEEQQRLIWAALEQAESTN) forms a coiled coil. Polar residues-rich tracts occupy residues 462–473 (LTGNSVTSSPSR) and 494–519 (FSSI…SSLN).

It belongs to the ZCCHC8 family.

Its subcellular location is the nucleus. The protein resides in the nucleoplasm. In terms of biological role, scaffolding subunit of the trimeric nuclear exosome targeting (NEXT) complex that is involved in the surveillance and turnover of aberrant transcripts and non-coding RNAs. NEXT functions as an RNA exosome cofactor that directs a subset of non-coding short-lived RNAs for exosomal degradation. May be involved in pre-mRNA splicing. It is required for 3'-end maturation of telomerase RNA component (TERC), TERC 3'-end targeting to the nuclear RNA exosome, and for telomerase function. This chain is Zinc finger CCHC domain-containing protein 8 (ZCCHC8), found in Gallus gallus (Chicken).